Consider the following 165-residue polypeptide: Lithostathine (165 aa).

Residues 1 to 21 (MTRNKYFILLSCLMVLSPSQG) form the signal peptide. Gln22 carries the pyrrolidone carboxylic acid modification. One can recognise a C-type lectin domain in the interval 33 to 163 (ITCPEGSNAY…DAQLSFVCKF (131 aa)). Cystine bridges form between Cys35-Cys46, Cys63-Cys161, and Cys136-Cys153. Asn129 carries N-linked (GlcNAc...) asparagine glycosylation.

In terms of tissue distribution, expressed only in regenerating islets, but not in normal pancreatic islets, insulinomas or regenerating liver.

It is found in the secreted. Functionally, might act as an inhibitor of spontaneous calcium carbonate precipitation. The protein is Lithostathine (Reg1) of Rattus norvegicus (Rat).